Reading from the N-terminus, the 95-residue chain is Co-chaperonin GroES (95 aa).

Belongs to the GroES chaperonin family. As to quaternary structure, heptamer of 7 subunits arranged in a ring. Interacts with the chaperonin GroEL.

The protein localises to the cytoplasm. In terms of biological role, together with the chaperonin GroEL, plays an essential role in assisting protein folding. The GroEL-GroES system forms a nano-cage that allows encapsulation of the non-native substrate proteins and provides a physical environment optimized to promote and accelerate protein folding. GroES binds to the apical surface of the GroEL ring, thereby capping the opening of the GroEL channel. The polypeptide is Co-chaperonin GroES (Rickettsia bellii (strain RML369-C)).